The chain runs to 458 residues: F-box/WD repeat-containing protein 9 (458 aa).

An N-acetylmethionine modification is found at M1. A disordered region spans residues 1 to 28 (MELPPGPRDDPHAWDDDSDPELEPDTDA). The segment covering 16–28 (DDSDPELEPDTDA) has biased composition (acidic residues). Phosphoserine is present on residues S18 and S59. The F-box domain occupies 76 to 123 (VPGLLSLPPELLLEICAYLDARLVLHVLPRVCHALRDLVRDRVTWRLR). WD repeat units lie at residues 171-210 (GHFASIDSVLLLQGGTLCLSGSRDRNVNLWDLQQLGVEPS), 224-261 (THKGWVWSLAALDHRVCSGSWDSTVKLWDMAADGQQFG), 264-301 (KGKAAVLCLSYRPDILVTGTYDKKVTVYDPRVGPALLK), 305-342 (LHSSAVLALLADDRHIISGSEDHTLVVFDRRANSVLQR), 344-381 (QLDSYLLCMSYQEPQLWAGDNQGLLHVFANRSGCFQLV), 387-424 (GHRSQITGIKHSLGALYTTSTDKTIRVHVPTDPPRTIC), and 427-458 (SHHNVLNGICAEGNLVVAASGGLSLEVWRLQA).

As to quaternary structure, interacts with SKP1 and CUL1.

Substrate-recognition component of the SCF (SKP1-CUL1-F-box protein)-type E3 ubiquitin ligase complex. The polypeptide is F-box/WD repeat-containing protein 9 (FBXW9) (Bos taurus (Bovine)).